The sequence spans 535 residues: Peptide chain release factor 3 (535 aa).

Residues 8-277 form the tr-type G domain; sequence KRRRTFAIIS…TLVELAPPPG (270 aa). Residues 17–24, 85–89, and 139–142 each bind GTP; these read SHPDAGKT, DTPGH, and NKLD.

It belongs to the TRAFAC class translation factor GTPase superfamily. Classic translation factor GTPase family. PrfC subfamily.

It is found in the cytoplasm. Its function is as follows. Increases the formation of ribosomal termination complexes and stimulates activities of RF-1 and RF-2. It binds guanine nucleotides and has strong preference for UGA stop codons. It may interact directly with the ribosome. The stimulation of RF-1 and RF-2 is significantly reduced by GTP and GDP, but not by GMP. The polypeptide is Peptide chain release factor 3 (Nitrosomonas europaea (strain ATCC 19718 / CIP 103999 / KCTC 2705 / NBRC 14298)).